The chain runs to 143 residues: ATP synthase subunit b' (143 aa).

A helical membrane pass occupies residues A6–F26.

Belongs to the ATPase B chain family. F-type ATPases have 2 components, F(1) - the catalytic core - and F(0) - the membrane proton channel. F(1) has five subunits: alpha(3), beta(3), gamma(1), delta(1), epsilon(1). F(0) has four main subunits: a(1), b(1), b'(1) and c(10-14). The alpha and beta chains form an alternating ring which encloses part of the gamma chain. F(1) is attached to F(0) by a central stalk formed by the gamma and epsilon chains, while a peripheral stalk is formed by the delta, b and b' chains.

The protein resides in the cellular thylakoid membrane. In terms of biological role, f(1)F(0) ATP synthase produces ATP from ADP in the presence of a proton or sodium gradient. F-type ATPases consist of two structural domains, F(1) containing the extramembraneous catalytic core and F(0) containing the membrane proton channel, linked together by a central stalk and a peripheral stalk. During catalysis, ATP synthesis in the catalytic domain of F(1) is coupled via a rotary mechanism of the central stalk subunits to proton translocation. Functionally, component of the F(0) channel, it forms part of the peripheral stalk, linking F(1) to F(0). The b'-subunit is a diverged and duplicated form of b found in plants and photosynthetic bacteria. This chain is ATP synthase subunit b', found in Nostoc punctiforme (strain ATCC 29133 / PCC 73102).